The sequence spans 201 residues: ATP-dependent Clp protease proteolytic subunit (201 aa).

Ser101 (nucleophile) is an active-site residue. His126 is a catalytic residue.

This sequence belongs to the peptidase S14 family. Fourteen ClpP subunits assemble into 2 heptameric rings which stack back to back to give a disk-like structure with a central cavity, resembling the structure of eukaryotic proteasomes.

Its subcellular location is the cytoplasm. The catalysed reaction is Hydrolysis of proteins to small peptides in the presence of ATP and magnesium. alpha-casein is the usual test substrate. In the absence of ATP, only oligopeptides shorter than five residues are hydrolyzed (such as succinyl-Leu-Tyr-|-NHMec, and Leu-Tyr-Leu-|-Tyr-Trp, in which cleavage of the -Tyr-|-Leu- and -Tyr-|-Trp bonds also occurs).. Cleaves peptides in various proteins in a process that requires ATP hydrolysis. Has a chymotrypsin-like activity. Plays a major role in the degradation of misfolded proteins. This chain is ATP-dependent Clp protease proteolytic subunit, found in Francisella tularensis subsp. tularensis (strain FSC 198).